The following is a 157-amino-acid chain: Arginine repressor (157 aa).

The protein belongs to the ArgR family.

The protein localises to the cytoplasm. It participates in amino-acid biosynthesis; L-arginine biosynthesis [regulation]. In terms of biological role, regulates arginine biosynthesis genes. The polypeptide is Arginine repressor (Colwellia psychrerythraea (strain 34H / ATCC BAA-681) (Vibrio psychroerythus)).